We begin with the raw amino-acid sequence, 338 residues long: Phosphate acyltransferase (338 aa).

It belongs to the PlsX family. In terms of assembly, homodimer. Probably interacts with PlsY.

It localises to the cytoplasm. The enzyme catalyses a fatty acyl-[ACP] + phosphate = an acyl phosphate + holo-[ACP]. Its pathway is lipid metabolism; phospholipid metabolism. Its function is as follows. Catalyzes the reversible formation of acyl-phosphate (acyl-PO(4)) from acyl-[acyl-carrier-protein] (acyl-ACP). This enzyme utilizes acyl-ACP as fatty acyl donor, but not acyl-CoA. This is Phosphate acyltransferase from Salinibacter ruber (strain DSM 13855 / M31).